The sequence spans 207 residues: Thiamine-phosphate synthase (207 aa).

Residues 36 to 40 (QMRIK) and aspartate 68 contribute to the 4-amino-2-methyl-5-(diphosphooxymethyl)pyrimidine site. Mg(2+)-binding residues include aspartate 69 and aspartate 88. Serine 106 is a binding site for 4-amino-2-methyl-5-(diphosphooxymethyl)pyrimidine. 132 to 134 (TKT) serves as a coordination point for 2-[(2R,5Z)-2-carboxy-4-methylthiazol-5(2H)-ylidene]ethyl phosphate. Lysine 135 lines the 4-amino-2-methyl-5-(diphosphooxymethyl)pyrimidine pocket. Residues glycine 162 and 182–183 (IS) contribute to the 2-[(2R,5Z)-2-carboxy-4-methylthiazol-5(2H)-ylidene]ethyl phosphate site.

It belongs to the thiamine-phosphate synthase family. Mg(2+) is required as a cofactor.

It catalyses the reaction 2-[(2R,5Z)-2-carboxy-4-methylthiazol-5(2H)-ylidene]ethyl phosphate + 4-amino-2-methyl-5-(diphosphooxymethyl)pyrimidine + 2 H(+) = thiamine phosphate + CO2 + diphosphate. The enzyme catalyses 2-(2-carboxy-4-methylthiazol-5-yl)ethyl phosphate + 4-amino-2-methyl-5-(diphosphooxymethyl)pyrimidine + 2 H(+) = thiamine phosphate + CO2 + diphosphate. It carries out the reaction 4-methyl-5-(2-phosphooxyethyl)-thiazole + 4-amino-2-methyl-5-(diphosphooxymethyl)pyrimidine + H(+) = thiamine phosphate + diphosphate. It functions in the pathway cofactor biosynthesis; thiamine diphosphate biosynthesis; thiamine phosphate from 4-amino-2-methyl-5-diphosphomethylpyrimidine and 4-methyl-5-(2-phosphoethyl)-thiazole: step 1/1. In terms of biological role, condenses 4-methyl-5-(beta-hydroxyethyl)thiazole monophosphate (THZ-P) and 2-methyl-4-amino-5-hydroxymethyl pyrimidine pyrophosphate (HMP-PP) to form thiamine monophosphate (TMP). The protein is Thiamine-phosphate synthase of Pyrococcus furiosus (strain ATCC 43587 / DSM 3638 / JCM 8422 / Vc1).